A 608-amino-acid polypeptide reads, in one-letter code: Protein transport protein SEC9 (608 aa).

Disordered stretches follow at residues 1–23 (MGFK…SMQD) and 50–307 (VTQK…QTAA). The span at 9 to 21 (KKDPTESEIRESM) shows a compositional bias: basic and acidic residues. Low complexity-rich tracts occupy residues 54-67 (SSAA…NPYA) and 74-85 (SGGNPYAAAAAG). Gly residues predominate over residues 100–121 (NGGGGNGGSNSNGGSNSNGGSN). Low complexity predominate over residues 122 to 134 (GSPYKMNNGGNNA). The segment covering 169-183 (SKKEEAPPPLEDPRL) has biased composition (basic and acidic residues). Residues 198–215 (ERDDYEPVYDVGLPEEPE) show a composition bias toward acidic residues. Over residues 241-260 (NVDRELEEDKTALFGPRDDP) the composition is skewed to basic and acidic residues. Residues 390–452 (RFTKQQSAAS…KIAEDKAKEL (63 aa)) form the t-SNARE coiled-coil homology 1 domain. The disordered stretch occupies residues 514–533 (GEKSKHRKEMMSKYGSRPGR). One can recognise a t-SNARE coiled-coil homology 2 domain in the interval 545 to 607 (DILEDEIDNN…HLNTARLAGI (63 aa)).

The protein belongs to the SNAP-25 family.

The sequence is that of Protein transport protein SEC9 (SEC9) from Yarrowia lipolytica (strain CLIB 122 / E 150) (Yeast).